We begin with the raw amino-acid sequence, 151 residues long: UPF0178 protein Ping_0754 (151 aa).

This sequence belongs to the UPF0178 family.

The protein is UPF0178 protein Ping_0754 of Psychromonas ingrahamii (strain DSM 17664 / CCUG 51855 / 37).